The primary structure comprises 164 residues: UPF0304 protein NT01EI_2691 (164 aa).

Belongs to the UPF0304 family.

This Edwardsiella ictaluri (strain 93-146) protein is UPF0304 protein NT01EI_2691.